Reading from the N-terminus, the 228-residue chain is Small ribosomal subunit protein uS2c (228 aa).

This sequence belongs to the universal ribosomal protein uS2 family.

It is found in the plastid. The protein resides in the chloroplast. The sequence is that of Small ribosomal subunit protein uS2c (rps2) from Mesostigma viride (Green alga).